The sequence spans 85 residues: MQSAMKLFFIFLIFVFSVSCGPSAPQMKTRDVLERTHKCFLVGGECKSECSSWEYEYVFCYTGPCCVMREYKRVEKFSNTPKYTT.

The N-terminal stretch at 1–23 (MQSAMKLFFIFLIFVFSVSCGPS) is a signal peptide. Disulfide bonds link Cys39-Cys65, Cys46-Cys60, and Cys50-Cys66.

It belongs to the beta-defensin family.

It localises to the secreted. Its function is as follows. Has antibacterial activity. This Rattus norvegicus (Rat) protein is Beta-defensin 18 (Defb18).